We begin with the raw amino-acid sequence, 338 residues long: Cell division protein ZipA (338 aa).

Residues 1-2 (MS) are Periplasmic-facing. Residues 3–23 (LREWLIAIGTLVIIGIVIDGV) traverse the membrane as a helical segment. Over 24–338 (RRMRRARKES…FERKQRSQRA (315 aa)) the chain is Cytoplasmic. Residues 33-192 (SMAISSGMGA…RKNQPLAGAN (160 aa)) are disordered. Composition is skewed to basic and acidic residues over residues 70-81 (TLEDRGYLKRDM) and 138-162 (EVDR…RAEE).

Belongs to the ZipA family. As to quaternary structure, interacts with FtsZ via their C-terminal domains.

Its subcellular location is the cell inner membrane. In terms of biological role, essential cell division protein that stabilizes the FtsZ protofilaments by cross-linking them and that serves as a cytoplasmic membrane anchor for the Z ring. Also required for the recruitment to the septal ring of downstream cell division proteins. This is Cell division protein ZipA from Marinobacter nauticus (strain ATCC 700491 / DSM 11845 / VT8) (Marinobacter aquaeolei).